The chain runs to 749 residues: Sentrin-specific protease 5 (749 aa).

Residues Thr268 to Asn279 are compositionally biased toward basic and acidic residues. Disordered regions lie at residues Thr268 to Val288 and Gln394 to Gly440. The tract at residues Phe557–Leu718 is protease. Active-site residues include His640, Asp657, and Cys707.

This sequence belongs to the peptidase C48 family. In terms of assembly, interacts with CCAR2.

It localises to the nucleus. It is found in the nucleolus. In terms of biological role, protease that catalyzes two essential functions in the SUMO pathway: processing of full-length SUMO3 to its mature form and deconjugation of SUMO2 and SUMO3 from targeted proteins. Has weak proteolytic activity against full-length SUMO1 or SUMO1 conjugates. Required for cell division. This Mus musculus (Mouse) protein is Sentrin-specific protease 5 (Senp5).